We begin with the raw amino-acid sequence, 759 residues long: Phosphoribosylformylglycinamidine synthase subunit PurL (759 aa).

H61 is a catalytic residue. Residues Y64 and K105 each coordinate ATP. E107 is a Mg(2+) binding site. Substrate is bound by residues 108–111 (SHNH) and R130. H109 acts as the Proton acceptor in catalysis. D131 contributes to the Mg(2+) binding site. Q260 contacts substrate. Residue D288 coordinates Mg(2+). 332-334 (ESQ) serves as a coordination point for substrate. ATP contacts are provided by D520 and G557. N558 is a Mg(2+) binding site. Position 560 (S560) interacts with substrate.

This sequence belongs to the FGAMS family. In terms of assembly, monomer. Part of the FGAM synthase complex composed of 1 PurL, 1 PurQ and 2 PurS subunits.

The protein resides in the cytoplasm. The enzyme catalyses N(2)-formyl-N(1)-(5-phospho-beta-D-ribosyl)glycinamide + L-glutamine + ATP + H2O = 2-formamido-N(1)-(5-O-phospho-beta-D-ribosyl)acetamidine + L-glutamate + ADP + phosphate + H(+). It functions in the pathway purine metabolism; IMP biosynthesis via de novo pathway; 5-amino-1-(5-phospho-D-ribosyl)imidazole from N(2)-formyl-N(1)-(5-phospho-D-ribosyl)glycinamide: step 1/2. Part of the phosphoribosylformylglycinamidine synthase complex involved in the purines biosynthetic pathway. Catalyzes the ATP-dependent conversion of formylglycinamide ribonucleotide (FGAR) and glutamine to yield formylglycinamidine ribonucleotide (FGAM) and glutamate. The FGAM synthase complex is composed of three subunits. PurQ produces an ammonia molecule by converting glutamine to glutamate. PurL transfers the ammonia molecule to FGAR to form FGAM in an ATP-dependent manner. PurS interacts with PurQ and PurL and is thought to assist in the transfer of the ammonia molecule from PurQ to PurL. The chain is Phosphoribosylformylglycinamidine synthase subunit PurL from Thermoplasma acidophilum (strain ATCC 25905 / DSM 1728 / JCM 9062 / NBRC 15155 / AMRC-C165).